Consider the following 229-residue polypeptide: Ribonuclease 3 (229 aa).

The RNase III domain occupies 5 to 127; sequence LSRLERQLGY…LIGAIYLDAG (123 aa). Glutamate 40 provides a ligand contact to Mg(2+). The active site involves aspartate 44. Mg(2+)-binding residues include aspartate 113 and glutamate 116. Residue glutamate 116 is part of the active site. The 71-residue stretch at 154–224 folds into the DRBM domain; sequence DPKTRLQEFL…AAAALIALGV (71 aa).

This sequence belongs to the ribonuclease III family. Homodimer. The cofactor is Mg(2+).

Its subcellular location is the cytoplasm. The enzyme catalyses Endonucleolytic cleavage to 5'-phosphomonoester.. Digests double-stranded RNA. Involved in the processing of primary rRNA transcript to yield the immediate precursors to the large and small rRNAs (23S and 16S). Processes some mRNAs, and tRNAs when they are encoded in the rRNA operon. Processes pre-crRNA and tracrRNA of type II CRISPR loci if present in the organism. In Pseudomonas fluorescens (strain ATCC BAA-477 / NRRL B-23932 / Pf-5), this protein is Ribonuclease 3.